The sequence spans 73 residues: Homeodomain-only protein (73 aa).

A DNA-binding region (homeobox; degenerate) is located at residues Ala-3–Glu-62.

Interacts with serum response factor (SRF). Component of a large complex containing histone deacetylases such as HDAC2. Interacts with the acetylated forms of HSPA1A and HSPA1B. Interacts with HSPA8. Expressed in the embryonic and adult heart and in the adult brain, liver, lung, skeletal muscle, intestine and spleen. Throughout embryonic and postnatal development, it is expressed in the myocardium.

It is found in the nucleus. Its subcellular location is the cytoplasm. Atypical homeodomain protein which does not bind DNA and is required to modulate cardiac growth and development. Acts via its interaction with SRF, thereby modulating the expression of SRF-dependent cardiac-specific genes and cardiac development. Prevents SRF-dependent transcription either by inhibiting SRF binding to DNA or by recruiting histone deacetylase (HDAC) proteins that prevent transcription by SRF. Overexpression causes cardiac hypertrophy. Acts as a co-chaperone for HSPA1A and HSPA1B chaperone proteins and assists in chaperone-mediated protein refolding. This chain is Homeodomain-only protein (Hopx), found in Mus musculus (Mouse).